We begin with the raw amino-acid sequence, 213 residues long: ATP phosphoribosyltransferase (213 aa).

This sequence belongs to the ATP phosphoribosyltransferase family. Short subfamily. As to quaternary structure, heteromultimer composed of HisG and HisZ subunits.

It localises to the cytoplasm. The enzyme catalyses 1-(5-phospho-beta-D-ribosyl)-ATP + diphosphate = 5-phospho-alpha-D-ribose 1-diphosphate + ATP. Its pathway is amino-acid biosynthesis; L-histidine biosynthesis; L-histidine from 5-phospho-alpha-D-ribose 1-diphosphate: step 1/9. In terms of biological role, catalyzes the condensation of ATP and 5-phosphoribose 1-diphosphate to form N'-(5'-phosphoribosyl)-ATP (PR-ATP). Has a crucial role in the pathway because the rate of histidine biosynthesis seems to be controlled primarily by regulation of HisG enzymatic activity. The polypeptide is ATP phosphoribosyltransferase (Anoxybacillus flavithermus (strain DSM 21510 / WK1)).